The sequence spans 247 residues: GTP cyclohydrolase 1 type 2 homolog (247 aa).

Residues His-63, His-64, Asp-101, His-215, and Glu-219 each coordinate a divalent metal cation.

The protein belongs to the GTP cyclohydrolase I type 2/NIF3 family. Toroid-shaped homohexamer. In the hexamer, 3 dimers assemble to form a ring-like structure surrounding a central hole.

Functionally, provides significant protection from radiation damage and may be involved in the degradation of radiation-damaged nucleotides. The protein is GTP cyclohydrolase 1 type 2 homolog (ybgI) of Salmonella typhi.